Here is a 165-residue protein sequence, read N- to C-terminus: Crossover junction endodeoxyribonuclease RuvC (165 aa).

Residues Asp-7, Glu-67, and Asp-140 contribute to the active site. Positions 7, 67, and 140 each coordinate Mg(2+).

It belongs to the RuvC family. Homodimer which binds Holliday junction (HJ) DNA. The HJ becomes 2-fold symmetrical on binding to RuvC with unstacked arms; it has a different conformation from HJ DNA in complex with RuvA. In the full resolvosome a probable DNA-RuvA(4)-RuvB(12)-RuvC(2) complex forms which resolves the HJ. It depends on Mg(2+) as a cofactor.

It is found in the cytoplasm. The catalysed reaction is Endonucleolytic cleavage at a junction such as a reciprocal single-stranded crossover between two homologous DNA duplexes (Holliday junction).. Functionally, the RuvA-RuvB-RuvC complex processes Holliday junction (HJ) DNA during genetic recombination and DNA repair. Endonuclease that resolves HJ intermediates. Cleaves cruciform DNA by making single-stranded nicks across the HJ at symmetrical positions within the homologous arms, yielding a 5'-phosphate and a 3'-hydroxyl group; requires a central core of homology in the junction. The consensus cleavage sequence is 5'-(A/T)TT(C/G)-3'. Cleavage occurs on the 3'-side of the TT dinucleotide at the point of strand exchange. HJ branch migration catalyzed by RuvA-RuvB allows RuvC to scan DNA until it finds its consensus sequence, where it cleaves and resolves the cruciform DNA. This is Crossover junction endodeoxyribonuclease RuvC from Thermotoga petrophila (strain ATCC BAA-488 / DSM 13995 / JCM 10881 / RKU-1).